Here is a 279-residue protein sequence, read N- to C-terminus: Ribosomal RNA small subunit methyltransferase J (279 aa).

S-adenosyl-L-methionine-binding positions include 138–139 (ER) and Asp194.

Belongs to the methyltransferase superfamily. RsmJ family.

It localises to the cytoplasm. The catalysed reaction is guanosine(1516) in 16S rRNA + S-adenosyl-L-methionine = N(2)-methylguanosine(1516) in 16S rRNA + S-adenosyl-L-homocysteine + H(+). Its function is as follows. Specifically methylates the guanosine in position 1516 of 16S rRNA. The sequence is that of Ribosomal RNA small subunit methyltransferase J from Acinetobacter baumannii (strain ACICU).